Reading from the N-terminus, the 247-residue chain is Tetraspanin-18 (247 aa).

The Cytoplasmic segment spans residues 1-15; it reads MEGDCLSCMKYLMFL. Residues 16–36 traverse the membrane as a helical segment; the sequence is FNFFIFLGGACLLGVGIWVIV. Over 37–49 the chain is Extracellular; the sequence is DPTGFREIVAANP. A helical membrane pass occupies residues 50–70; sequence LLFTGAYIMLAMGAMLFLLGF. Residues 71–82 lie on the Cytoplasmic side of the membrane; it reads LGCCGAIRENKC. The helical transmembrane segment at 83–103 threads the bilayer; that stretch reads LLLFFFMFILLIFLAELSAAI. Residues 104 to 222 lie on the Extracellular side of the membrane; sequence LAFIFRENLT…SFETYVYLAG (119 aa). 2 N-linked (GlcNAc...) asparagine glycosylation sites follow: asparagine 111 and asparagine 129. A helical membrane pass occupies residues 223–243; that stretch reads ALAIGVLAIELFAMIFAMCLF. Topologically, residues 244–247 are cytoplasmic; that stretch reads RGIQ.

It belongs to the tetraspanin (TM4SF) family.

It localises to the membrane. Maintains CDH6 protein and promotes CDH6-dependent adherens junctions, inhibiting neural crest migration. The sequence is that of Tetraspanin-18 from Gallus gallus (Chicken).